A 281-amino-acid polypeptide reads, in one-letter code: tRNA uridine(34) hydroxylase (281 aa).

The Rhodanese domain maps to 125–222 (AREDVKTIDT…YFLKTKNKDG (98 aa)). Residue C182 is the Cysteine persulfide intermediate of the active site.

Belongs to the TrhO family.

The enzyme catalyses uridine(34) in tRNA + AH2 + O2 = 5-hydroxyuridine(34) in tRNA + A + H2O. Functionally, catalyzes oxygen-dependent 5-hydroxyuridine (ho5U) modification at position 34 in tRNAs. The protein is tRNA uridine(34) hydroxylase of Neorickettsia sennetsu (strain ATCC VR-367 / Miyayama) (Ehrlichia sennetsu).